Reading from the N-terminus, the 122-residue chain is Small ribosomal subunit protein uS13 (122 aa).

Residues 93-122 are disordered; the sequence is RRGLPVRGQRTKTNARTRKGPKKTIAGKKK.

This sequence belongs to the universal ribosomal protein uS13 family. In terms of assembly, part of the 30S ribosomal subunit. Forms a loose heterodimer with protein S19. Forms two bridges to the 50S subunit in the 70S ribosome.

Functionally, located at the top of the head of the 30S subunit, it contacts several helices of the 16S rRNA. In the 70S ribosome it contacts the 23S rRNA (bridge B1a) and protein L5 of the 50S subunit (bridge B1b), connecting the 2 subunits; these bridges are implicated in subunit movement. Contacts the tRNAs in the A and P-sites. This is Small ribosomal subunit protein uS13 from Corynebacterium jeikeium (strain K411).